Here is a 200-residue protein sequence, read N- to C-terminus: ATP-dependent Clp protease proteolytic subunit 1 (200 aa).

Residue Ser-98 is the Nucleophile of the active site. Residue His-123 is part of the active site.

The protein belongs to the peptidase S14 family. As to quaternary structure, fourteen ClpP subunits assemble into 2 heptameric rings which stack back to back to give a disk-like structure with a central cavity, resembling the structure of eukaryotic proteasomes.

The protein resides in the cytoplasm. The enzyme catalyses Hydrolysis of proteins to small peptides in the presence of ATP and magnesium. alpha-casein is the usual test substrate. In the absence of ATP, only oligopeptides shorter than five residues are hydrolyzed (such as succinyl-Leu-Tyr-|-NHMec, and Leu-Tyr-Leu-|-Tyr-Trp, in which cleavage of the -Tyr-|-Leu- and -Tyr-|-Trp bonds also occurs).. In terms of biological role, cleaves peptides in various proteins in a process that requires ATP hydrolysis. Has a chymotrypsin-like activity. Plays a major role in the degradation of misfolded proteins. The chain is ATP-dependent Clp protease proteolytic subunit 1 from Mycobacterium leprae (strain TN).